The following is a 266-amino-acid chain: Hydroxyethylthiazole kinase (266 aa).

Position 39 (methionine 39) interacts with substrate. Positions 115 and 160 each coordinate ATP. Glycine 187 is a substrate binding site.

Belongs to the Thz kinase family. The cofactor is Mg(2+).

It carries out the reaction 5-(2-hydroxyethyl)-4-methylthiazole + ATP = 4-methyl-5-(2-phosphooxyethyl)-thiazole + ADP + H(+). Its pathway is cofactor biosynthesis; thiamine diphosphate biosynthesis; 4-methyl-5-(2-phosphoethyl)-thiazole from 5-(2-hydroxyethyl)-4-methylthiazole: step 1/1. In terms of biological role, catalyzes the phosphorylation of the hydroxyl group of 4-methyl-5-beta-hydroxyethylthiazole (THZ). This chain is Hydroxyethylthiazole kinase, found in Staphylococcus aureus (strain MSSA476).